The chain runs to 275 residues: Echotoxin-2 (275 aa).

Residues 1 to 23 form the signal peptide; sequence MKRNILALVVVVALISQSRPAES. Positions 23 to 32 are plays an important role in the hemolytic activity; sequence SAGGTIIATL. The interval 49–67 is N-terminal region; that stretch reads ETGASVASAAAAATSSDYS. Positions 123, 141, 143, 176, and 177 each coordinate phosphocholine. The trp-rich region, which is important for the binding to lipid membrane stretch occupies residues 141–156; the sequence is SAPYNFDFYSNWLAVG. The propeptide occupies 249–275; it reads RAIQQELARRAEEEKQRKRKALDEMLK.

The protein belongs to the actinoporin family. Sea anemone subfamily. In terms of assembly, octamer or nonamer in membranes. Monomer in the soluble state. As to expression, salivary gland.

Its subcellular location is the secreted. It localises to the nematocyst. The protein localises to the target cell membrane. In terms of biological role, pore-forming protein that forms cations-selective hydrophilic pores of around 1 nm and causes cardiac stimulation and cytolysis. Pore formation is a multi-step process that involves specific recognition of membrane sphingomyelin (but neither cholesterol nor phosphatidylcholine) using aromatic rich region and adjacent phosphocholine (POC) binding site, firm binding to the membrane (mainly driven by hydrophobic interactions) accompanied by the transfer of the N-terminal region to the lipid-water interface and finally pore formation after oligomerization of monomers. Exhibits both hemolytic and lethal activities. Gangliosides potently inhibits the hemolytic activity. This chain is Echotoxin-2, found in Monoplex parthenopeus (Giant triton).